A 260-amino-acid polypeptide reads, in one-letter code: Thiazole synthase (260 aa).

The active-site Schiff-base intermediate with DXP is the Lys96. Residues Gly157, 184–185 (AG), and 206–207 (NT) contribute to the 1-deoxy-D-xylulose 5-phosphate site.

This sequence belongs to the ThiG family. As to quaternary structure, homotetramer. Forms heterodimers with either ThiH or ThiS.

It localises to the cytoplasm. The catalysed reaction is [ThiS sulfur-carrier protein]-C-terminal-Gly-aminoethanethioate + 2-iminoacetate + 1-deoxy-D-xylulose 5-phosphate = [ThiS sulfur-carrier protein]-C-terminal Gly-Gly + 2-[(2R,5Z)-2-carboxy-4-methylthiazol-5(2H)-ylidene]ethyl phosphate + 2 H2O + H(+). It participates in cofactor biosynthesis; thiamine diphosphate biosynthesis. Functionally, catalyzes the rearrangement of 1-deoxy-D-xylulose 5-phosphate (DXP) to produce the thiazole phosphate moiety of thiamine. Sulfur is provided by the thiocarboxylate moiety of the carrier protein ThiS. In vitro, sulfur can be provided by H(2)S. The protein is Thiazole synthase of Nitrobacter winogradskyi (strain ATCC 25391 / DSM 10237 / CIP 104748 / NCIMB 11846 / Nb-255).